Here is a 407-residue protein sequence, read N- to C-terminus: Sensor histidine kinase YdfH (407 aa).

At 1–25 the chain is on the cytoplasmic side; sequence MLIRNPFKDKYYSHDRRALNMLALR. 2 consecutive transmembrane segments (helical) span residues 26–46 and 47–67; these read VPGL…QFVS and GGWS…FALL. The Cytoplasmic portion of the chain corresponds to 68-78; the sequence is HWHSYRWVKKR. The next 2 membrane-spanning stretches (helical) occupy residues 79–99 and 100–120; these read VILY…LMTG and FFIL…IGMA. The Cytoplasmic segment spans residues 121 to 125; sequence DRRRT. The helical transmembrane segment at 126–146 threads the bilayer; that stretch reads FLILYLLLLLVINSAYHLHKG. Over 147-150 the chain is Extracellular; it reads EVLH. A helical transmembrane segment spans residues 151–171; sequence FIVIAAPIMIVIITYAATFFA. Over 172 to 407 the chain is Cytoplasmic; sequence QVDEKIKAQL…VPIQGEMQDE (236 aa). Positions 201–402 constitute a Histidine kinase domain; sequence ERQRMARDLH…QIEITVPIQG (202 aa). Phosphohistidine; by autocatalysis is present on histidine 210.

It localises to the cell membrane. It carries out the reaction ATP + protein L-histidine = ADP + protein N-phospho-L-histidine.. Its function is as follows. Member of the two-component regulatory system YdfH/YdfI. May activate YdfI by phosphorylation. The protein is Sensor histidine kinase YdfH (ydfH) of Bacillus subtilis (strain 168).